The following is a 203-amino-acid chain: Large ribosomal subunit protein uL18 (203 aa).

Belongs to the universal ribosomal protein uL18 family. In terms of assembly, part of the 50S ribosomal subunit. Contacts the 5S and 23S rRNAs.

In terms of biological role, this is one of the proteins that bind and probably mediate the attachment of the 5S RNA into the large ribosomal subunit, where it forms part of the central protuberance. The protein is Large ribosomal subunit protein uL18 of Pyrococcus abyssi (strain GE5 / Orsay).